The sequence spans 195 residues: BH3-interacting domain death agonist (195 aa).

N-acetylmethionine is present on methionine 1. Residues 58–69 (TDGSQASRSFNQ) are compositionally biased toward polar residues. Positions 58–77 (TDGSQASRSFNQGRIEPDSE) are disordered. Phosphoserine is present on serine 78. The BH3 signature appears at 87 to 100 (ARHLAQIGDEMDHN).

Forms heterodimers either with the pro-apoptotic protein BAX or the anti-apoptotic protein BCL2. Interacts with PLEKHN1. As to quaternary structure, interacts with ITCH. Interacts with MTCH2. TNF-alpha induces caspase-mediated cleavage into a major p15 and minor p13 and p11 products. Cleaved by CASP6 into a major p15 and minor p13 products, leading to release of cytochrome c and subsequent nonalcoholic steatohepatitis. Post-translationally, ubiquitinated by ITCH; ubiquitination results in proteasome-dependent degradation.

Its subcellular location is the cytoplasm. It localises to the mitochondrion membrane. The protein localises to the mitochondrion outer membrane. In terms of biological role, induces caspases and apoptosis. Counters the protective effect of BCL2. Functionally, induces caspase activation and apoptosis. Allows the release of cytochrome c. This chain is BH3-interacting domain death agonist (Bid), found in Mus musculus (Mouse).